Here is a 434-residue protein sequence, read N- to C-terminus: UDP-N-acetylmuramoylalanine--D-glutamate ligase (434 aa).

126–132 (GTSGKTT) lines the ATP pocket.

It belongs to the MurCDEF family.

It is found in the cytoplasm. The enzyme catalyses UDP-N-acetyl-alpha-D-muramoyl-L-alanine + D-glutamate + ATP = UDP-N-acetyl-alpha-D-muramoyl-L-alanyl-D-glutamate + ADP + phosphate + H(+). The protein operates within cell wall biogenesis; peptidoglycan biosynthesis. Functionally, cell wall formation. Catalyzes the addition of glutamate to the nucleotide precursor UDP-N-acetylmuramoyl-L-alanine (UMA). The polypeptide is UDP-N-acetylmuramoylalanine--D-glutamate ligase (Desulfovibrio desulfuricans (strain ATCC 27774 / DSM 6949 / MB)).